Here is a 294-residue protein sequence, read N- to C-terminus: Ribosomal RNA small subunit methyltransferase A (294 aa).

Positions 31, 33, 58, 79, 111, and 136 each coordinate S-adenosyl-L-methionine.

Belongs to the class I-like SAM-binding methyltransferase superfamily. rRNA adenine N(6)-methyltransferase family. RsmA subfamily.

It localises to the cytoplasm. The enzyme catalyses adenosine(1518)/adenosine(1519) in 16S rRNA + 4 S-adenosyl-L-methionine = N(6)-dimethyladenosine(1518)/N(6)-dimethyladenosine(1519) in 16S rRNA + 4 S-adenosyl-L-homocysteine + 4 H(+). In terms of biological role, specifically dimethylates two adjacent adenosines (A1518 and A1519) in the loop of a conserved hairpin near the 3'-end of 16S rRNA in the 30S particle. May play a critical role in biogenesis of 30S subunits. The protein is Ribosomal RNA small subunit methyltransferase A of Lactobacillus acidophilus (strain ATCC 700396 / NCK56 / N2 / NCFM).